Consider the following 188-residue polypeptide: Ribosome-recycling factor (188 aa).

It belongs to the RRF family.

The protein resides in the cytoplasm. Responsible for the release of ribosomes from messenger RNA at the termination of protein biosynthesis. May increase the efficiency of translation by recycling ribosomes from one round of translation to another. The chain is Ribosome-recycling factor from Acidiphilium cryptum (strain JF-5).